Here is a 380-residue protein sequence, read N- to C-terminus: Succinyl-diaminopimelate desuccinylase (380 aa).

Position 69 (His69) interacts with Zn(2+). Residue Asp71 is part of the active site. Asp102 is a Zn(2+) binding site. The active-site Proton acceptor is Glu135. Zn(2+)-binding residues include Glu136, Glu164, and His353.

Belongs to the peptidase M20A family. DapE subfamily. Homodimer. The cofactor is Zn(2+). Requires Co(2+) as cofactor.

The catalysed reaction is N-succinyl-(2S,6S)-2,6-diaminopimelate + H2O = (2S,6S)-2,6-diaminopimelate + succinate. It functions in the pathway amino-acid biosynthesis; L-lysine biosynthesis via DAP pathway; LL-2,6-diaminopimelate from (S)-tetrahydrodipicolinate (succinylase route): step 3/3. Functionally, catalyzes the hydrolysis of N-succinyl-L,L-diaminopimelic acid (SDAP), forming succinate and LL-2,6-diaminopimelate (DAP), an intermediate involved in the bacterial biosynthesis of lysine and meso-diaminopimelic acid, an essential component of bacterial cell walls. This is Succinyl-diaminopimelate desuccinylase from Ruegeria pomeroyi (strain ATCC 700808 / DSM 15171 / DSS-3) (Silicibacter pomeroyi).